The primary structure comprises 92 residues: Acylphosphatase (92 aa).

One can recognise an Acylphosphatase-like domain in the interval 7–92; the sequence is KTRCTISGRV…DPAPAEFSVG (86 aa). Residues Arg22 and Asn40 contribute to the active site.

This sequence belongs to the acylphosphatase family.

It carries out the reaction an acyl phosphate + H2O = a carboxylate + phosphate + H(+). The protein is Acylphosphatase (acyP) of Halorhodospira halophila (strain DSM 244 / SL1) (Ectothiorhodospira halophila (strain DSM 244 / SL1)).